The chain runs to 290 residues: UPF0507 protein YML003W (290 aa).

This sequence belongs to the UPF0507 family.

This chain is UPF0507 protein YML003W, found in Saccharomyces cerevisiae (strain ATCC 204508 / S288c) (Baker's yeast).